The chain runs to 282 residues: HTH-type transcriptional activator RhaR (282 aa).

Residues 179–277 (DKLITALANS…GMTPSQWRHL (99 aa)) form the HTH araC/xylS-type domain. 2 DNA-binding regions (H-T-H motif) span residues 196-217 (DAFC…RAQT) and 244-267 (VSEI…TRET).

Binds DNA as a dimer.

The protein localises to the cytoplasm. Its function is as follows. Activates expression of the rhaSR operon in response to L-rhamnose. In Salmonella typhi, this protein is HTH-type transcriptional activator RhaR.